The following is a 95-amino-acid chain: MPKLAVVLLVLLILPLSYFDVAGGQAAEGDRRGNGLARYPQRGGRDNEAECQINTPGSSWGKCCMTRMCGTMCCARSGCTCVYHWRRGHGCSCPG.

Positions 1–24 are cleaved as a signal peptide; sequence MPKLAVVLLVLLILPLSYFDVAGG. Residues 25–45 constitute a propeptide that is removed on maturation; that stretch reads QAAEGDRRGNGLARYPQRGGR. The residue at position 50 (glutamate 50) is a 4-carboxyglutamate. A 4-hydroxyproline modification is found at proline 56. Cystine bridges form between cysteine 64-cysteine 73, cysteine 69-cysteine 81, cysteine 74-cysteine 91, and cysteine 79-cysteine 93.

Belongs to the conotoxin D superfamily. Hetero-, homo- or pseudo-homodimer (identical sequence, different post-translational modifications). Heterodimer of [carboxy'Glu-48', hydroxy'Pro-54']Ms20.1 and [carboxyGlu-50, hydroxyPro-56]Ms20.4 may exist. Expressed by the venom duct.

It localises to the secreted. Alpha-conotoxins act on postsynaptic membranes, they bind to the nicotinic acetylcholine receptors (nAChR) and thus inhibit them. Through its two C-terminal domains, this homodimeric protein would bind to two nAChR allosteric sites, located outside the nAChR C-loop of the principal binding face and at the adjacent binding interface in a clockwise direction. This toxin specifically blocks mammalian neuronal nAChR of the alpha-7/CHRNA7, alpha-3-beta-2/CHRNA3-CHRNB2 and alpha-4-beta-2/CHRNA4-CHRNB2 subtypes. This Conus mustelinus (Weasel cone) protein is Alpha-conotoxin-like Ms20.4.